The following is a 237-amino-acid chain: Phosphoribosylaminoimidazole-succinocarboxamide synthase (237 aa).

Belongs to the SAICAR synthetase family.

It catalyses the reaction 5-amino-1-(5-phospho-D-ribosyl)imidazole-4-carboxylate + L-aspartate + ATP = (2S)-2-[5-amino-1-(5-phospho-beta-D-ribosyl)imidazole-4-carboxamido]succinate + ADP + phosphate + 2 H(+). It participates in purine metabolism; IMP biosynthesis via de novo pathway; 5-amino-1-(5-phospho-D-ribosyl)imidazole-4-carboxamide from 5-amino-1-(5-phospho-D-ribosyl)imidazole-4-carboxylate: step 1/2. The chain is Phosphoribosylaminoimidazole-succinocarboxamide synthase from Listeria innocua serovar 6a (strain ATCC BAA-680 / CLIP 11262).